Here is a 146-residue protein sequence, read N- to C-terminus: Anti-sigma F factor (146 aa).

Belongs to the anti-sigma-factor family.

It catalyses the reaction L-seryl-[protein] + ATP = O-phospho-L-seryl-[protein] + ADP + H(+). It carries out the reaction L-threonyl-[protein] + ATP = O-phospho-L-threonyl-[protein] + ADP + H(+). Functionally, binds to sigma F and blocks its ability to form an RNA polymerase holoenzyme (E-sigma F). Phosphorylates SpoIIAA on a serine residue. This phosphorylation may enable SpoIIAA to act as an anti-anti-sigma factor that counteracts SpoIIAB and thus releases sigma F from inhibition. The chain is Anti-sigma F factor from Geobacillus kaustophilus (strain HTA426).